A 226-amino-acid chain; its full sequence is Type-5 uracil-DNA glycosylase (226 aa).

[4Fe-4S] cluster contacts are provided by Cys-23, Cys-26, Cys-125, and Cys-140.

The protein belongs to the uracil-DNA glycosylase (UDG) superfamily. Type 5 (UDGb) family.

Functionally, DNA glycosylase with broad substrate specificity. Can remove uracil from double-stranded DNA containing either a U/G or U/A base pair. Can also process hydroxymethyluracil (mispaired with guanine or adenine), hypoxanthine and fluorouracil. Exhibits a clear preference for double-stranded DNA substrates, but can also process uracil in single-stranded DNA, with lower efficiency. This is Type-5 uracil-DNA glycosylase from Pyrobaculum aerophilum (strain ATCC 51768 / DSM 7523 / JCM 9630 / CIP 104966 / NBRC 100827 / IM2).